The primary structure comprises 134 residues: Transcription antitermination protein NusB (134 aa).

It belongs to the NusB family.

In terms of biological role, involved in transcription antitermination. Required for transcription of ribosomal RNA (rRNA) genes. Binds specifically to the boxA antiterminator sequence of the ribosomal RNA (rrn) operons. The polypeptide is Transcription antitermination protein NusB (Shewanella sp. (strain MR-4)).